The following is a 723-amino-acid chain: Choline transporter-like protein 4 (723 aa).

The Cytoplasmic portion of the chain corresponds to 1–36 (MGKKKQEEEQNSSEYGAPAQYDPTFNGPIHKRSCTD). The helical transmembrane segment at 37 to 57 (IICCVLFMLVITGYMVVGILA) threads the bilayer. Over 58–245 (WLYGDPRHVL…RIFEDFAKTW (188 aa)) the chain is Extracellular. 4 N-linked (GlcNAc...) asparagine glycosylation sites follow: N71, N202, N211, and N219. A helical transmembrane segment spans residues 246–266 (QWIVAGLVIAMVVSVLFLLLL). Residues 267-269 (RFT) are Cytoplasmic-facing. A helical transmembrane segment spans residues 270–290 (APVLIWILIFGVLAVGAFGIW). At 291–325 (YCYNDYMSLASSNLTFSNVGFTTNVQVYLQVRDTW) the chain is on the extracellular side. Residue N303 is glycosylated (N-linked (GlcNAc...) asparagine). A helical membrane pass occupies residues 326–346 (LAFLIILCIVEAVLILALIFL). The Cytoplasmic portion of the chain corresponds to 347-374 (RTRILIAIALIQETSKALGHMMSTLLYP). The chain crosses the membrane as a helical span at residues 375–395 (VVTFVLLLVCVSYWGITALYL). The Extracellular portion of the chain corresponds to 396–464 (ATSGAPIYKV…RNLFNLQIYN (69 aa)). N-linked (GlcNAc...) asparagine glycans are attached at residues N409, N421, and N430. Residues 465-485 (VVAFLWCVNFVIALGHCTLAG) form a helical membrane-spanning segment. Over 486-516 (AFASYYWAFSKPADIPTFPLTQSFMRALRYH) the chain is Cytoplasmic. The helical transmembrane segment at 517–537 (VGSLAFGALILTLVQIVRIIL) threads the bilayer. Residues 538-578 (EYLDHKFKAAQNPCARFLMCCLKCCFWCLEKFIKFINRNAY) lie on the Extracellular side of the membrane. A helical transmembrane segment spans residues 579–599 (IMIAIYGKNFCVSAKNAFFLL). Residues 600-615 (MRNIVRVVVLDKVTDL) are Cytoplasmic-facing. A helical membrane pass occupies residues 616–636 (LLFFGKLLVVGGIGVLAFFFF). The Extracellular portion of the chain corresponds to 637–655 (SGRIQLPGNTFQTAALNYY). The helical transmembrane segment at 656–676 (WMPIITVVFGAYLIAHGFFSV) threads the bilayer. Topologically, residues 677–723 (YNMGVDTLFLCFLEDLERNDGSAEKPYFMSKNLMKILNKKNKQPKTG) are cytoplasmic.

This sequence belongs to the CTL (choline transporter-like) family.

The protein localises to the membrane. Its subcellular location is the apical cell membrane. The enzyme catalyses choline(out) + n H(+)(in) = choline(in) + n H(+)(out). The catalysed reaction is thiamine diphosphate(out) = thiamine diphosphate(in). Choline transporter that seems to play a role in the choline-acetylcholine system and is required to the efferent innervation of hair cells in the olivocochlear bundle for the maintenance of physiological function of outer hair cells and the protection of hair cells from acoustic injury. Also described as a thiamine pyrophosphate transporter. The polypeptide is Choline transporter-like protein 4 (slc44a4) (Danio rerio (Zebrafish)).